The chain runs to 448 residues: Probable glycine dehydrogenase (decarboxylating) subunit 1 (448 aa).

The protein belongs to the GcvP family. N-terminal subunit subfamily. In terms of assembly, the glycine cleavage system is composed of four proteins: P, T, L and H. In this organism, the P 'protein' is a heterodimer of two subunits.

The catalysed reaction is N(6)-[(R)-lipoyl]-L-lysyl-[glycine-cleavage complex H protein] + glycine + H(+) = N(6)-[(R)-S(8)-aminomethyldihydrolipoyl]-L-lysyl-[glycine-cleavage complex H protein] + CO2. The glycine cleavage system catalyzes the degradation of glycine. The P protein binds the alpha-amino group of glycine through its pyridoxal phosphate cofactor; CO(2) is released and the remaining methylamine moiety is then transferred to the lipoamide cofactor of the H protein. This is Probable glycine dehydrogenase (decarboxylating) subunit 1 from Staphylococcus aureus (strain COL).